The chain runs to 218 residues: Small ribosomal subunit protein uS3c (218 aa).

Residues 47-118 (VQKNIRISSG…KLNIAITRIT (72 aa)) enclose the KH type-2 domain.

This sequence belongs to the universal ribosomal protein uS3 family. In terms of assembly, part of the 30S ribosomal subunit.

The protein resides in the plastid. Its subcellular location is the chloroplast. The chain is Small ribosomal subunit protein uS3c (rps3) from Vitis vinifera (Grape).